A 193-amino-acid chain; its full sequence is MPNWGGGKKCGVCQKTVYFAEEVQCEGNSFHKSCFLCMVCKKNLDSTTVAVHGEEIYCKSCYGKKYGPKGYGYGQGAGTLSTDKGESLGIKHEEAPGHRPTTNPNASKFAQKIGGSERCPRCSQAVYAAEKVIGAGKSWHKSCFRCAKCGKGLESTTLADKDGEIYCKGCYAKNFGPKGFGFGQGAGALVHSE.

The LIM zinc-binding 1 domain occupies 10-61 (CGVCQKTVYFAEEVQCEGNSFHKSCFLCMVCKKNLDSTTVAVHGEEIYCKSC). The short motif at 64 to 69 (KKYGPK) is the Nuclear localization signal element. Ser81 is modified (phosphoserine). Position 84 is an N6-acetyllysine (Lys84). A Glycyl lysine isopeptide (Lys-Gly) (interchain with G-Cter in SUMO2) cross-link involves residue Lys91. An N6-acetyllysine mark is found at Lys112, Lys131, Lys137, and Lys161. An LIM zinc-binding 2 domain is found at 119 to 170 (CPRCSQAVYAAEKVIGAGKSWHKSCFRCAKCGKGLESTTLADKDGEIYCKGC). The residue at position 192 (Ser192) is a Phosphoserine.

In terms of assembly, interacts with ASCC1; ASCC2 and TRIP4.

It localises to the nucleus. Functionally, could play a role in neuronal development. This is Cysteine and glycine-rich protein 1 (Csrp1) from Mus musculus (Mouse).